Reading from the N-terminus, the 287-residue chain is 4-hydroxybenzoate octaprenyltransferase (287 aa).

The next 5 membrane-spanning stretches (helical) occupy residues 35 to 55 (FAAG…GVVV), 96 to 116 (LFGV…PLVV), 211 to 231 (IIAA…MLAG), 235 to 255 (IYGL…KLIY), and 262 to 282 (CFTA…ALTL).

This sequence belongs to the UbiA prenyltransferase family. Requires Mg(2+) as cofactor.

It localises to the cell inner membrane. The enzyme catalyses all-trans-octaprenyl diphosphate + 4-hydroxybenzoate = 4-hydroxy-3-(all-trans-octaprenyl)benzoate + diphosphate. The protein operates within cofactor biosynthesis; ubiquinone biosynthesis. In terms of biological role, catalyzes the prenylation of para-hydroxybenzoate (PHB) with an all-trans polyprenyl group. Mediates the second step in the final reaction sequence of ubiquinone-8 (UQ-8) biosynthesis, which is the condensation of the polyisoprenoid side chain with PHB, generating the first membrane-bound Q intermediate 3-octaprenyl-4-hydroxybenzoate. The sequence is that of 4-hydroxybenzoate octaprenyltransferase from Shewanella halifaxensis (strain HAW-EB4).